We begin with the raw amino-acid sequence, 475 residues long: Cytochrome P450 monooxygenase opdE (475 aa).

The helical transmembrane segment at 10 to 32 (VQNIPVLLLSCGFLAILFRSLVL) threads the bilayer. Residue cysteine 457 participates in heme binding.

This sequence belongs to the cytochrome P450 family. Requires heme as cofactor.

It is found in the membrane. Its pathway is secondary metabolite biosynthesis. Cytochrome P450 monooxygenase; part of the gene cluster that mediates the biosynthesis of oxopyrrolidines, polyketide-amino acid hybrid compounds with feature structures of tetramic acid. Does not seem to play a role in oxopyrrolidines A and B biosynthesis. May be involved in further modifications of these oxopyrrolidines. The sequence is that of Cytochrome P450 monooxygenase opdE from Penicillium oxalicum (strain 114-2 / CGMCC 5302) (Penicillium decumbens).